We begin with the raw amino-acid sequence, 176 residues long: ATP-dependent protease subunit HslV (176 aa).

Thr-2 is an active-site residue. Na(+) is bound by residues Gly-157, Cys-160, and Thr-163.

It belongs to the peptidase T1B family. HslV subfamily. A double ring-shaped homohexamer of HslV is capped on each side by a ring-shaped HslU homohexamer. The assembly of the HslU/HslV complex is dependent on binding of ATP.

It is found in the cytoplasm. The enzyme catalyses ATP-dependent cleavage of peptide bonds with broad specificity.. With respect to regulation, allosterically activated by HslU binding. Functionally, protease subunit of a proteasome-like degradation complex believed to be a general protein degrading machinery. This chain is ATP-dependent protease subunit HslV, found in Pectobacterium carotovorum subsp. carotovorum (strain PC1).